We begin with the raw amino-acid sequence, 926 residues long: Lipoxygenase 4, chloroplastic (926 aa).

A chloroplast-targeting transit peptide spans 1 to 58 (MALANEIMGSRLIFERSSSLASPFHSRFSIKKKTQRTQFSINPFDPRPMRAVNSSGVV). The region spanning 106-228 (FKETLVKHLD…DHPSKRILFT (123 aa)) is the PLAT domain. A Lipoxygenase domain is found at 231-926 (PYLPSETPSG…CRGVPNSVSI (696 aa)). Residues His585, His590, His777, Asn781, and Ile926 each contribute to the Fe cation site.

The protein belongs to the lipoxygenase family. Fe cation is required as a cofactor. As to expression, expressed in leaves.

Its subcellular location is the plastid. It localises to the chloroplast. The catalysed reaction is (9Z,12Z)-octadecadienoate + O2 = (13S)-hydroperoxy-(9Z,11E)-octadecadienoate. It carries out the reaction (9Z,12Z,15Z)-octadecatrienoate + O2 = (13S)-hydroperoxy-(9Z,11E,15Z)-octadecatrienoate. Its pathway is lipid metabolism; oxylipin biosynthesis. Functionally, plant lipoxygenases may be involved in a number of diverse aspects of plant physiology including growth and development, pest resistance, and senescence or responses to wounding. Catalyzes the hydroperoxidation of lipids containing a cis,cis-1,4-pentadiene structure. 13S-lipoxygenase that can use linolenic acid as substrates. This is Lipoxygenase 4, chloroplastic (LOX4) from Arabidopsis thaliana (Mouse-ear cress).